The following is a 271-amino-acid chain: 3-methyl-2-oxobutanoate hydroxymethyltransferase (271 aa).

Mg(2+) is bound by residues Asp-53 and Asp-92. 3-methyl-2-oxobutanoate-binding positions include 53–54, Asp-92, and Lys-120; that span reads DS. Glu-122 contacts Mg(2+). Catalysis depends on Glu-189, which acts as the Proton acceptor.

Belongs to the PanB family. In terms of assembly, homodecamer; pentamer of dimers. The cofactor is Mg(2+).

The protein resides in the cytoplasm. The catalysed reaction is 3-methyl-2-oxobutanoate + (6R)-5,10-methylene-5,6,7,8-tetrahydrofolate + H2O = 2-dehydropantoate + (6S)-5,6,7,8-tetrahydrofolate. The protein operates within cofactor biosynthesis; (R)-pantothenate biosynthesis; (R)-pantoate from 3-methyl-2-oxobutanoate: step 1/2. In terms of biological role, catalyzes the reversible reaction in which hydroxymethyl group from 5,10-methylenetetrahydrofolate is transferred onto alpha-ketoisovalerate to form ketopantoate. This Burkholderia vietnamiensis (strain G4 / LMG 22486) (Burkholderia cepacia (strain R1808)) protein is 3-methyl-2-oxobutanoate hydroxymethyltransferase.